We begin with the raw amino-acid sequence, 254 residues long: Vitamin B12 import ATP-binding protein BtuD (254 aa).

The ABC transporter domain maps to 3 to 239 (INYISVGNRL…ENLQQVFETP (237 aa)). 29-36 (GPNGSGKS) lines the ATP pocket.

The protein belongs to the ABC transporter superfamily. Vitamin B12 importer (TC 3.A.1.13.1) family. The complex is composed of two ATP-binding proteins (BtuD), two transmembrane proteins (BtuC) and a solute-binding protein (BtuF).

It is found in the cell inner membrane. It carries out the reaction an R-cob(III)alamin(out) + ATP + H2O = an R-cob(III)alamin(in) + ADP + phosphate + H(+). Part of the ABC transporter complex BtuCDF involved in vitamin B12 import. Responsible for energy coupling to the transport system. This chain is Vitamin B12 import ATP-binding protein BtuD, found in Vibrio vulnificus (strain CMCP6).